The primary structure comprises 366 residues: MYKIGIILGTRPEIIKMSPVIRELTTKKFFLIHTNQHYSENMDKIFFEELNLKKPDYNLNIGSGSHGDQTGRMLMEIEKVLLKEKPDFVLVQGDTNTVLAGALAASKLGIKIGHIEAGLRSFDRKMPEETNRVLTDHISEFLFAPTKTAANNILKEGISDEKIHIVGNTIVDATIQNLKIAEKNEKVCKFISKITKNEKYFLLTLHRAENTDNFEILSKLVTSINNISKKYEKNIIFPIHPRTHKKLNEFGLINKLENNHLIKIIEPVGYLEFLGLEKNAELIITDSGGLQEEACILNVPCVTLRENTERPETLDVNSNILAGSDPENILNCVEKMLKSNRHWNNPFGDGNSGKIIVNIVFGEKKP.

H206 is a catalytic residue.

It belongs to the UDP-N-acetylglucosamine 2-epimerase family. Homodimer.

It is found in the cytoplasm. The catalysed reaction is UDP-N-acetyl-alpha-D-glucosamine = UDP-N-acetyl-alpha-D-mannosamine. Its function is as follows. Catalyzes the reversible epimerization at C-2 of UDP-N-acetylglucosamine (UDP-GlcNAc) to produce UDP-N-acetylmannosamine (UDP-ManNAc), the activated donor of ManNAc residues. The protein is UDP-N-acetylglucosamine 2-epimerase (wecB) of Methanococcus maripaludis (strain DSM 14266 / JCM 13030 / NBRC 101832 / S2 / LL).